The chain runs to 99 residues: UPF0213 protein SP_1535 (99 aa).

The GIY-YIG domain maps to 3 to 78 (HKAYMYVLEC…KRKKRPQKEE (76 aa)).

The protein belongs to the UPF0213 family.

In Streptococcus pneumoniae serotype 4 (strain ATCC BAA-334 / TIGR4), this protein is UPF0213 protein SP_1535.